We begin with the raw amino-acid sequence, 108 residues long: UPF0060 membrane protein KPN78578_15550 (108 aa).

4 helical membrane-spanning segments follow: residues 6 to 26 (LLFF…WLWL), 29 to 49 (GATP…VWLL), 61 to 81 (AAYG…VDGV), and 86 to 106 (YDWA…AGWG).

The protein belongs to the UPF0060 family.

The protein localises to the cell inner membrane. This is UPF0060 membrane protein KPN78578_15550 from Klebsiella pneumoniae subsp. pneumoniae (strain ATCC 700721 / MGH 78578).